The chain runs to 181 residues: Large ribosomal subunit protein uL5 (181 aa).

This sequence belongs to the universal ribosomal protein uL5 family. Part of the 50S ribosomal subunit; part of the 5S rRNA/L5/L18/L25 subcomplex. Contacts the 5S rRNA and the P site tRNA. Forms a bridge to the 30S subunit in the 70S ribosome.

In terms of biological role, this is one of the proteins that bind and probably mediate the attachment of the 5S RNA into the large ribosomal subunit, where it forms part of the central protuberance. In the 70S ribosome it contacts protein S13 of the 30S subunit (bridge B1b), connecting the 2 subunits; this bridge is implicated in subunit movement. Contacts the P site tRNA; the 5S rRNA and some of its associated proteins might help stabilize positioning of ribosome-bound tRNAs. This Onion yellows phytoplasma (strain OY-M) protein is Large ribosomal subunit protein uL5.